We begin with the raw amino-acid sequence, 522 residues long: MSQDLQKEVASRKTFAIISHPDAGKTTITEQLLLFGGVIRSAGTVKGKKSGKFATSDWMEIEKQRGISVTSSVMQFDYNGSRINILDTPGHSDFSEDTYRTLMAVDSAVMVIDAAKGIEAQTLKLFKVCRMRGIPIFTFINKMDRQGKMPLELLAELEEVLGIESYPMNWPIGMGKELAGLYDRYHRVIEQYRSEEDERFLPLGEDGDLKEAHAIQKLLYYDQALEEIMLLDEAGNDFSRERIIAGEQTPVFFGSALTNFGVETFLRTFVDFAPSPSSHESNEGVIEADNPKFSGFIFKIQANMNPAHRDRIAFIRICSGEFERGMNVTLTRTGKSMKLANSTQFMADDRETVNRAVAGDIIGLYDTGNYQIGDTITNGSKKLEFEKLPQFTPELFMRVYAKNVMKQKHFHKGVEQLVQEGAIQLFKTWRTEEYIIGAVGQLQFEVFEHRMRGEYNSEIRMEPIGKKIARWVKEEDADEKLSTARSMLVKDRFDQPLFLFENEFAINWFNDKNPDIELTSLL.

One can recognise a tr-type G domain in the interval 10–277; the sequence is ASRKTFAIIS…TFVDFAPSPS (268 aa). Residues 19-26, 87-91, and 141-144 contribute to the GTP site; these read SHPDAGKT, DTPGH, and NKMD.

This sequence belongs to the TRAFAC class translation factor GTPase superfamily. Classic translation factor GTPase family. PrfC subfamily.

It is found in the cytoplasm. In terms of biological role, increases the formation of ribosomal termination complexes and stimulates activities of RF-1 and RF-2. It binds guanine nucleotides and has strong preference for UGA stop codons. It may interact directly with the ribosome. The stimulation of RF-1 and RF-2 is significantly reduced by GTP and GDP, but not by GMP. This is Peptide chain release factor 3 from Listeria monocytogenes serotype 4b (strain CLIP80459).